A 447-amino-acid chain; its full sequence is Beta-glucuronosyltransferase GlcAT14A (447 aa).

At methionine 1 to lysine 33 the chain is on the cytoplasmic side. The helical; Signal-anchor for type II membrane protein transmembrane segment at tryptophan 34–threonine 54 threads the bilayer. Residues threonine 55–lysine 447 lie on the Lumenal side of the membrane. Asparagine 151, asparagine 200, asparagine 329, and asparagine 405 each carry an N-linked (GlcNAc...) asparagine glycan.

This sequence belongs to the glycosyltransferase 14 family.

The protein localises to the golgi apparatus membrane. Functionally, beta-glucuronosyltransferase involved in the biosynthesis of type II arabinogalactan (AG). Modifies both the beta-1,6-linked galactan and beta-1,3-linked galactan present in type II AG. Transfers glucuronate to beta-1,6-galactooligosaccharides with degrees of polymerization ranging from 3 to 11. Transfers glucuronate to beta-1,3-galactooligosaccharides with degrees of polymerization ranging from 5 to 7. The addition of glucuronate at the O6 position may terminate galactose chain extension. Required for cell elongation during seedling growth. This Arabidopsis thaliana (Mouse-ear cress) protein is Beta-glucuronosyltransferase GlcAT14A.